The following is a 961-amino-acid chain: Retinoblastoma-like protein homolog lin-35 (961 aa).

2 disordered regions span residues 1 to 43 and 55 to 129; these read MPKR…PPAK and GGVQ…TPPP. A compositionally biased stretch (polar residues) spans 68 to 81; it reads ELTQMTIKQETEGN. Residues 107–119 show a composition bias toward acidic residues; it reads GEDDDYEEDDADS. Ser-714 carries the phosphoserine; by CDK4 modification. Thr-719 carries the post-translational modification Phosphothreonine; by CDK4.

It belongs to the retinoblastoma protein (RB) family. As to quaternary structure, component of the DRM complex, at least composed of lin-9, lin-35, lin-37, lin-52, lin-53, lin-54, dpl-1 and efl-1. Interacts with lin-53. Interacts (via C-terminus) with dpl-1 (via C-terminus) and efl-1 (via C-terminus). Interacts (via C-terminus) with lin-8. Phosphorylated by the cyclin dependent kinase cdk-4. Phosphorylation inhibits the transcriptional repressor activity of lin-35 and allows for progression through the G1 phase of the cell cycle during postembryonic development.

The protein localises to the nucleus. In terms of biological role, key regulator of cell division which acts as a transcriptional repressor and negatively regulates cell cycle progression in its active unphosphorylated form, but allows cell cycle progression when phosphorylated. When unphosphorylated and in its active form, interacts with E2F transcription factors such as efl-1 to repress their transcriptional activity and negatively regulate the progression through the G1 phase of the cell cycle during postembryonic development. May furthermore act with cell cycle regulator cki-1 to negatively regulate cell cycle progression. Acts redundantly with lin-53, fzr-1 and lin-23 to control cell cycle progression by regulating the expression of G1 phase cyclins. In particular, negatively regulates the expression of the cyclin E homolog cye-1, which is essential for the G1/S phase transition. Regulates cell division in the intestinal lineage, repressing the expression of genes such as cdc-25.2, which are required for intestinal cells to transition from the karyokinesis cell cycle (also known as nuclear division) to endoreplication, a specific growth pathway in the intestinal epithelium required for feeding and gut development in growing larvae during the L1 stage molt. Its role as a transcriptional repressor in the regulation of intestinal cell division during postembryonic development is most likely in complex with an E2F cell cycle regulatory transcription factor efl-1 and its binding partner the synthetic multivulva class B protein dpl-1. Synthetic multivulva (synMuv) class B protein. SynMuv proteins are required to repress the induction of vulval development by Ras signaling and probably act by forming the multiprotein DRM complex that represses transcription. Together with synMuv class B protein lin-53, and redundantly with synMuv class A protein lin-15A, represses transcription to control vulval development, most likely through antagonization of the Ras-signaling pathway in the major hypodermal syncytium hyp7. Acts redundantly with the transcriptional corepressor spr-1 and the zinc finger protein zfp-2 to play a role in vulval morphogenesis, promote germline proliferation and somatic gonad development. Acts redundantly with ubc-18 in the regulation of pharyngeal morphogenesis during embryonic development by negatively regulating the expression of proteins such as sup-35. Functions with the SWI/SNF complex and proteins such as pha-1 to regulate larval development. Functions redundantly with xnp-1 to regulate somatic gonad development. Acts redundantly with slr-2 to regulate the expression of intestinal genes required for nutrient utilization. Regulates transcription in response to starvation. Furthermore, in response to starvation, promotes germ cell programmed cell death by negatively regulating the expression of the anti-apoptotic protein ced-9. Conversely, in conjunction with mcd-1, efl-1 and the synthetic multivulva class B proteins dpl-1, lin-37 and lin-52, may also regulate transcription to promote programmed cell death independently of ced-1, ced-8 and ced-9 cell death pathways. Directly involved in heterochromatin formation by maintaining overall chromatin structure and, in particular, that of constitutive heterochromatin by stabilizing histone methylation. In particular, negatively regulates the expression of mes-4, a histone methyltransferase that controls the expression of germline specific genes. May play a role in double strand break formation during meiosis. May suppress sensitivity to RNAi. May play a role in the response to endoplasmic reticulum (ER) stress. The protein is Retinoblastoma-like protein homolog lin-35 of Caenorhabditis elegans.